A 213-amino-acid chain; its full sequence is Pyrrolidone-carboxylate peptidase (213 aa).

Active-site residues include Glu-78, Cys-141, and His-165.

The protein belongs to the peptidase C15 family. Homotetramer.

The protein localises to the cytoplasm. It carries out the reaction Release of an N-terminal pyroglutamyl group from a polypeptide, the second amino acid generally not being Pro.. Functionally, removes 5-oxoproline from various penultimate amino acid residues except L-proline. The sequence is that of Pyrrolidone-carboxylate peptidase from Alkaliphilus oremlandii (strain OhILAs) (Clostridium oremlandii (strain OhILAs)).